Consider the following 359-residue polypeptide: POU domain, class 5, transcription factor 1B (359 aa).

2 disordered regions span residues 1–53 (MAGH…GVGP) and 87–116 (QGGL…EPCT). Residue S111 is modified to Phosphoserine. Residues 138–212 (DIKALQKELE…LLQKWVEEAD (75 aa)) form the POU-specific domain. Positions 229–288 (ARKRKRTSIENRVRGNLENLFLQCPKPTLQISHIAQQLGLEKDVVRVWFCNRRQKGKRSS) form a DNA-binding region, homeobox. T235 bears the Phosphothreonine mark. A phosphoserine mark is found at S236, S288, and S289. The disordered stretch occupies residues 287–322 (SSSDYAQREDFEAAGSPFSGGPVSFPPAPGPHFGTP). The span at 299–309 (AAGSPFSGGPV) shows a compositional bias: low complexity. S354 carries the phosphoserine modification.

This sequence belongs to the POU transcription factor family. Class-5 subfamily. In terms of tissue distribution, detected in epithelial cells of the prostate (at protein level). Detected at the mRNA level in several cancer tissues (breast, uterine cervix, lung, thyroid gland, esophagus, colon, urinary bladder, and glioma).

Its subcellular location is the nucleus. The protein resides in the cytoplasm. Its function is as follows. Shows weak transcriptional activator activity. This chain is POU domain, class 5, transcription factor 1B (POU5F1B), found in Homo sapiens (Human).